A 198-amino-acid chain; its full sequence is Probable GTP-binding protein EngB (198 aa).

The region spanning 36–198 (SDPQFAFIGR…NLSKLQELLE (163 aa)) is the EngB-type G domain. GTP is bound by residues 44–51 (GRSNVGKS), 70–74 (GRTQL), 88–91 (DLPG), 155–158 (NKID), and 182–184 (ISA). Residues Ser-51 and Thr-72 each contribute to the Mg(2+) site.

This sequence belongs to the TRAFAC class TrmE-Era-EngA-EngB-Septin-like GTPase superfamily. EngB GTPase family. It depends on Mg(2+) as a cofactor.

Its function is as follows. Necessary for normal cell division and for the maintenance of normal septation. The sequence is that of Probable GTP-binding protein EngB from Mesomycoplasma hyopneumoniae (strain J / ATCC 25934 / NCTC 10110) (Mycoplasma hyopneumoniae).